A 304-amino-acid polypeptide reads, in one-letter code: Glutaminase (304 aa).

Positions 63, 114, 158, 165, 189, 240, and 258 each coordinate substrate.

This sequence belongs to the glutaminase family. Homotetramer.

It carries out the reaction L-glutamine + H2O = L-glutamate + NH4(+). This Shewanella baltica (strain OS223) protein is Glutaminase.